The sequence spans 813 residues: Calpain-7 (813 aa).

Residue Met1 is modified to N-acetylmethionine. Position 95 is a phosphothreonine (Thr95). Residues 232 to 540 (RERFAYPMPF…YDVIYLSWNP (309 aa)) form the Calpain catalytic domain. Residues Cys290, His458, and Asn478 contribute to the active site. The interval 541–701 (GLLKESTCIH…INGKWSGQSA (161 aa)) is domain III. A domain N region spans residues 702-813 (GGCGNFQETH…VIPIKTTQLQ (112 aa)).

Belongs to the peptidase C2 family.

The protein localises to the nucleus. Calcium-regulated non-lysosomal thiol-protease. This Sus scrofa (Pig) protein is Calpain-7 (CAPN7).